Here is a 618-residue protein sequence, read N- to C-terminus: Glucose starvation modulator protein 1 (618 aa).

Positions 20 to 48 form a DNA-binding region, zn(2)-C6 fungal-type; sequence CEFCHTKHIQCDVGRPCQNCLKRNIGKFC. The interval 325 to 352 is disordered; sequence ANANTHPSHNAKLESECDSSSHSDADLE. Positions 335 to 352 are enriched in basic and acidic residues; sequence AKLESECDSSSHSDADLE. A PAS domain is found at 466–538; that stretch reads LLDLENMAKL…QIFNELLAFG (73 aa).

It belongs to the ERT1/acuK family.

It localises to the nucleus. Its function is as follows. Transcription factor which regulates nonfermentable carbon utilization. Binds specifically to 5'-CGGN(8)CGG-3' and 5'-CGGN(9)CGG-3' sequences in the promoter region. This chain is Glucose starvation modulator protein 1 (GSM1), found in Saccharomyces cerevisiae (strain YJM789) (Baker's yeast).